The sequence spans 96 residues: Aspartyl/glutamyl-tRNA(Asn/Gln) amidotransferase subunit C (96 aa).

Belongs to the GatC family. Heterotrimer of A, B and C subunits.

The enzyme catalyses L-glutamyl-tRNA(Gln) + L-glutamine + ATP + H2O = L-glutaminyl-tRNA(Gln) + L-glutamate + ADP + phosphate + H(+). The catalysed reaction is L-aspartyl-tRNA(Asn) + L-glutamine + ATP + H2O = L-asparaginyl-tRNA(Asn) + L-glutamate + ADP + phosphate + 2 H(+). Its function is as follows. Allows the formation of correctly charged Asn-tRNA(Asn) or Gln-tRNA(Gln) through the transamidation of misacylated Asp-tRNA(Asn) or Glu-tRNA(Gln) in organisms which lack either or both of asparaginyl-tRNA or glutaminyl-tRNA synthetases. The reaction takes place in the presence of glutamine and ATP through an activated phospho-Asp-tRNA(Asn) or phospho-Glu-tRNA(Gln). The protein is Aspartyl/glutamyl-tRNA(Asn/Gln) amidotransferase subunit C of Leptospira borgpetersenii serovar Hardjo-bovis (strain JB197).